Consider the following 393-residue polypeptide: S-adenosylmethionine synthase (393 aa).

Histidine 17 contributes to the ATP binding site. Aspartate 19 provides a ligand contact to Mg(2+). A K(+)-binding site is contributed by glutamate 45. L-methionine-binding residues include glutamate 58 and glutamine 104. A flexible loop region spans residues glutamine 104–glutamate 114. Residues aspartate 171–lysine 173, aspartate 245, arginine 251–lysine 252, alanine 268, and lysine 272 contribute to the ATP site. An L-methionine-binding site is contributed by aspartate 245. Lysine 276 is an L-methionine binding site.

This sequence belongs to the AdoMet synthase family. In terms of assembly, homotetramer; dimer of dimers. Requires Mg(2+) as cofactor. The cofactor is K(+).

The protein localises to the cytoplasm. It catalyses the reaction L-methionine + ATP + H2O = S-adenosyl-L-methionine + phosphate + diphosphate. The protein operates within amino-acid biosynthesis; S-adenosyl-L-methionine biosynthesis; S-adenosyl-L-methionine from L-methionine: step 1/1. Functionally, catalyzes the formation of S-adenosylmethionine (AdoMet) from methionine and ATP. The overall synthetic reaction is composed of two sequential steps, AdoMet formation and the subsequent tripolyphosphate hydrolysis which occurs prior to release of AdoMet from the enzyme. The chain is S-adenosylmethionine synthase from Hyphomonas neptunium (strain ATCC 15444).